A 504-amino-acid chain; its full sequence is Terminase, large subunit (504 aa).

Residues 1 to 204 form an ATPase activity region; sequence MTRGERVIAF…LSIWIDDAVK (204 aa). Residues 54-61 carry the Walker A motif motif; that stretch reads IARKNGKT. Residues 149–154 carry the Walker B motif motif; that stretch reads LAILDE. A nuclease activity region spans residues 326-415; it reads FPFFWTPQKT…LPLVEFGQGF (90 aa). Mg(2+) is bound at residue Asp471.

Belongs to the Hendrixvirinae large terminase family. As to quaternary structure, homopentamer; forms a ring-like structure through which genomic DNA is translocated into the capsid. Interacts with the terminase small subunit; the active complex is composed of a pentamer ring of terminase large subunits and a nonamer ring of terminase small subunits. Interacts with the portal protein; this interaction allows the packaging of viral DNA. Requires Mg(2+) as cofactor. Mn(2+) is required as a cofactor.

Its activity is regulated as follows. Inhibited by zinc. In terms of biological role, the terminase large subunit acts as an ATP driven molecular motor necessary for viral DNA translocation into empty capsids and as an endonuclease that cuts the viral genome from the concetamer to initiate and to end a packaging reaction. The terminase lies at a unique vertex of the procapsid and is composed of two subunits, a small terminase subunit involved in viral DNA recognition (packaging sequence), and a large terminase subunit possessing endonucleolytic and ATPase activities. Both terminase subunits heterooligomerize and are docked on the portal protein to form the packaging machine. Packaging initiates by TerS recognizing the packaging sequence in the viral DNA. The nuclease activity of TerL cuts the viral DNA and the terminase-DNA complex binds to the portal of a procapsid shell. DNA is translocated into the capsid, powered by the packaging ATPase in TerL, which continues until the next site is encountered at which point the motor stops and again cuts the DNA to release the nucleocapsid filled with a unit-length genome ('unit length' packaging). The sequence is that of Terminase, large subunit (2) from Escherichia coli (Bacteriophage HK97).